We begin with the raw amino-acid sequence, 179 residues long: ATP-dependent protease subunit HslV (179 aa).

Thr7 is a catalytic residue. 3 residues coordinate Na(+): Gly162, Cys165, and Thr168.

This sequence belongs to the peptidase T1B family. HslV subfamily. A double ring-shaped homohexamer of HslV is capped on each side by a ring-shaped HslU homohexamer. The assembly of the HslU/HslV complex is dependent on binding of ATP.

The protein resides in the cytoplasm. It carries out the reaction ATP-dependent cleavage of peptide bonds with broad specificity.. Allosterically activated by HslU binding. Protease subunit of a proteasome-like degradation complex believed to be a general protein degrading machinery. This is ATP-dependent protease subunit HslV from Bordetella avium (strain 197N).